We begin with the raw amino-acid sequence, 104 residues long: uncharacterized protein (104 aa).

Disordered regions lie at residues 1–48 and 66–104; these read MLRR…NNQP and QENT…RRCS.

This is an uncharacterized protein from Saccharomyces cerevisiae (strain ATCC 204508 / S288c) (Baker's yeast).